The chain runs to 466 residues: MALFMAILGVLVLLLCLCSALLKWNEVRFRRKGLPPGAMGWPVFGETTEFLKQGPNFMKNKRARYGSFFKSHILGCPTIVSMDPELNRFILMNEAKGLVPGYPQSMLDILGTRNIAAVHGSTHKYMRGALLSIISPTLIRDQLLPKIDEFMRTHLMDWDNKVINIQEKTKEMAFLSSLKQIAGMESSSIAQPFMTEFFKLVLGTLSLPINLPRTNYRGGLQARKSIISILSRLLEERKASQDVHVDMLGCLMKKDENRYKLNDEEIIDLVITIMYSGYETVSTTSMMAVKYLHDHPKVLEEIRKEHFAIRERKKPEDPIDCNDLKSMRFTRAVIFETSRLATIVNGVLRKTTHDMELNGYLIPKGWRIYVYTREINYDPFLYHDPLTFNPWRWLGNSLESQSHFLIFGGGTRQCPGKELGIAEISTFLHYFVTRYRWEEVGGDKLMKFPRVVAPNGLHIRVSSFSN.

The helical transmembrane segment at 2–22 (ALFMAILGVLVLLLCLCSALL) threads the bilayer. Cys-414 is a heme binding site.

It belongs to the cytochrome P450 family. The cofactor is heme.

It localises to the membrane. Functionally, catalyzes the C6-oxidation step in brassinosteroids biosynthesis. This is Cytochrome P450 85A from Phaseolus vulgaris (Kidney bean).